A 195-amino-acid polypeptide reads, in one-letter code: HTH-type transcriptional regulator BetI (195 aa).

The 61-residue stretch at 8–68 folds into the HTH tetR-type domain; that stretch reads EIRRAQLIDA…ATMRHVLRDL (61 aa). The segment at residues 31–50 is a DNA-binding region (H-T-H motif); sequence TLASVAQRASISTGIVSHYF.

It functions in the pathway amine and polyamine biosynthesis; betaine biosynthesis via choline pathway [regulation]. In terms of biological role, repressor involved in the biosynthesis of the osmoprotectant glycine betaine. It represses transcription of the choline transporter BetT and the genes of BetAB involved in the synthesis of glycine betaine. In Paraburkholderia phytofirmans (strain DSM 17436 / LMG 22146 / PsJN) (Burkholderia phytofirmans), this protein is HTH-type transcriptional regulator BetI.